The sequence spans 219 residues: MNRFFGKAKPKAPPPSLTDCIGTVDSRAESIDKKISRLDAELVKYKDQIKKMREGPAKNMVKQKALRVLKQKRMYEQQRDNLAQQSFNMEQANYTIQSLKDTKTTVDAMKLGVKEMKKAYKEVKIDQIEDLQDQLEDMMEDANEIQEALGRSYGTPELDEDDLEAELDALGDELLADEDSSYLDEAASAPAIPEGVPTDTKNKDGVLVDEFGLPQIPAS.

Residues 1-10 (MNRFFGKAKP) are compositionally biased toward basic residues. The interval 1-21 (MNRFFGKAKPKAPPPSLTDCI) is disordered. Positions 26–179 (SRAESIDKKI…LGDELLADED (154 aa)) form a coiled coil. Ser86 carries the post-translational modification Phosphoserine. Residues 188–219 (SAPAIPEGVPTDTKNKDGVLVDEFGLPQIPAS) form a disordered region.

Belongs to the SNF7 family. Probable peripherally associated component of the endosomal sorting required for transport complex III (ESCRT-III). ESCRT-III components are thought to multimerize to form a flat lattice on the perimeter membrane of the endosome. Several assembly forms of ESCRT-III may exist that interact and act sequentially. Interacts with VTA1. Interacts with CHMP2A. Interacts with VTA1; the interaction involves soluble CHMP5. Interacts with NOD2. Interacts with BROX. Post-translationally, ISGylated. Isgylation inhibits its interaction with VTA1.

It is found in the cytoplasm. Its subcellular location is the cytosol. It localises to the endosome membrane. The protein resides in the midbody. Its function is as follows. Probable peripherally associated component of the endosomal sorting required for transport complex III (ESCRT-III) which is involved in multivesicular bodies (MVBs) formation and sorting of endosomal cargo proteins into MVBs. MVBs contain intraluminal vesicles (ILVs) that are generated by invagination and scission from the limiting membrane of the endosome and mostly are delivered to lysosomes enabling degradation of membrane proteins, such as stimulated growth factor receptors, lysosomal enzymes and lipids. The MVB pathway appears to require the sequential function of ESCRT-O, -I,-II and -III complexes. ESCRT-III proteins mostly dissociate from the invaginating membrane before the ILV is released. The ESCRT machinery also functions in topologically equivalent membrane fission events, such as the terminal stages of cytokinesis. ESCRT-III proteins are believed to mediate the necessary vesicle extrusion and/or membrane fission activities, possibly in conjunction with the AAA ATPase VPS4. This chain is Charged multivesicular body protein 5 (Chmp5), found in Mus musculus (Mouse).